We begin with the raw amino-acid sequence, 162 residues long: Transcriptional repressor NrdR (162 aa).

A zinc finger spans residues 3 to 34 (CPYCHHTDSRVLESRSAEGGQSIRRRRECLAC). The ATP-cone domain maps to 49–139 (ITVIKRNGDR…VYRQFQGISD (91 aa)).

This sequence belongs to the NrdR family. Zn(2+) serves as cofactor.

In terms of biological role, negatively regulates transcription of bacterial ribonucleotide reductase nrd genes and operons by binding to NrdR-boxes. The polypeptide is Transcriptional repressor NrdR (Thermosynechococcus vestitus (strain NIES-2133 / IAM M-273 / BP-1)).